The following is a 466-amino-acid chain: Asparagine--tRNA ligase (466 aa).

This sequence belongs to the class-II aminoacyl-tRNA synthetase family. As to quaternary structure, homodimer.

The protein localises to the cytoplasm. The catalysed reaction is tRNA(Asn) + L-asparagine + ATP = L-asparaginyl-tRNA(Asn) + AMP + diphosphate + H(+). The protein is Asparagine--tRNA ligase of Shewanella denitrificans (strain OS217 / ATCC BAA-1090 / DSM 15013).